The chain runs to 985 residues: Ephrin type-B receptor 1-A (985 aa).

The first 19 residues, M1–A19, serve as a signal peptide directing secretion. The Extracellular segment spans residues V20–P542. In terms of domain architecture, Eph LBD spans E21–Q203. 2 consecutive Fibronectin type-III domains span residues V324–A434 and A435–D532. 3 N-linked (GlcNAc...) asparagine glycosylation sites follow: N336, N428, and N482. A helical transmembrane segment spans residues L543–V563. Residues C564–A985 are Cytoplasmic-facing. Positions V620–I883 constitute a Protein kinase domain. ATP contacts are provided by residues I626–V634 and K652. The active-site Proton acceptor is the D745. One can recognise an SAM domain in the interval S912 to Q976. The PDZ-binding signature appears at S983–A985.

It belongs to the protein kinase superfamily. Tyr protein kinase family. Ephrin receptor subfamily. Heterotetramer upon binding of the ligand. The heterotetramer is composed of an ephrin dimer and a receptor dimer. Oligomerization is probably required to induce biological responses. Post-translationally, phosphorylated. Autophosphorylation is stimulated by ligands.

It is found in the cell membrane. Its subcellular location is the early endosome membrane. The protein resides in the cell projection. The protein localises to the dendrite. The catalysed reaction is L-tyrosyl-[protein] + ATP = O-phospho-L-tyrosyl-[protein] + ADP + H(+). Receptor tyrosine kinase which binds promiscuously transmembrane ephrin-B family ligands residing on adjacent cells, leading to contact-dependent bidirectional signaling into neighboring cells. The signaling pathway downstream of the receptor is referred to as forward signaling while the signaling pathway downstream of the ephrin ligand is referred to as reverse signaling. May play a role in axon guidance during nervous system development. May also play an important redundant role with other ephrin-B receptors in development and maturation of dendritic spines and synapse formation. More generally, may play a role in targeted cell migration and adhesion. Upon activation by ephrin-B ligands activates the MAPK/ERK and the JNK signaling cascades to regulate cell migration and adhesion respectively. This Xenopus laevis (African clawed frog) protein is Ephrin type-B receptor 1-A (ephb1-a).